The primary structure comprises 513 residues: ATP synthase subunit alpha (513 aa).

Residue 169-176 (GDRQTGKT) coordinates ATP.

The protein belongs to the ATPase alpha/beta chains family. F-type ATPases have 2 components, CF(1) - the catalytic core - and CF(0) - the membrane proton channel. CF(1) has five subunits: alpha(3), beta(3), gamma(1), delta(1), epsilon(1). CF(0) has three main subunits: a(1), b(2) and c(9-12). The alpha and beta chains form an alternating ring which encloses part of the gamma chain. CF(1) is attached to CF(0) by a central stalk formed by the gamma and epsilon chains, while a peripheral stalk is formed by the delta and b chains.

It is found in the cell inner membrane. The catalysed reaction is ATP + H2O + 4 H(+)(in) = ADP + phosphate + 5 H(+)(out). Functionally, produces ATP from ADP in the presence of a proton gradient across the membrane. The alpha chain is a regulatory subunit. This Shewanella loihica (strain ATCC BAA-1088 / PV-4) protein is ATP synthase subunit alpha.